The primary structure comprises 376 residues: GTPase Obg (376 aa).

The region spanning 2-161 (ASFVDEVLIR…RVVHVELRIV (160 aa)) is the Obg domain. An OBG-type G domain is found at 162 to 328 (ADVGFVGLPN…LQEAFVRLSD (167 aa)). GTP contacts are provided by residues 168 to 175 (GLPNAGKS), 193 to 197 (FTTRI), 215 to 218 (DVPG), 282 to 285 (TKLD), and 309 to 311 (SVH). Mg(2+) is bound by residues serine 175 and threonine 195.

Belongs to the TRAFAC class OBG-HflX-like GTPase superfamily. OBG GTPase family. As to quaternary structure, monomer. Mg(2+) serves as cofactor.

The protein resides in the cytoplasm. Its function is as follows. An essential GTPase which binds GTP, GDP and possibly (p)ppGpp with moderate affinity, with high nucleotide exchange rates and a fairly low GTP hydrolysis rate. Plays a role in control of the cell cycle, stress response, ribosome biogenesis and in those bacteria that undergo differentiation, in morphogenesis control. The chain is GTPase Obg from Treponema pallidum (strain Nichols).